The chain runs to 331 residues: Anthranilate phosphoribosyltransferase (331 aa).

5-phospho-alpha-D-ribose 1-diphosphate is bound by residues glycine 79, 82–83 (GD), threonine 87, 89–92 (NIST), 107–115 (KHGNYGATS), and alanine 119. Glycine 79 serves as a coordination point for anthranilate. Serine 91 provides a ligand contact to Mg(2+). Residue asparagine 110 participates in anthranilate binding. Arginine 165 is a binding site for anthranilate. Residues aspartate 223 and glutamate 224 each contribute to the Mg(2+) site.

Belongs to the anthranilate phosphoribosyltransferase family. As to quaternary structure, homodimer. Mg(2+) serves as cofactor.

It catalyses the reaction N-(5-phospho-beta-D-ribosyl)anthranilate + diphosphate = 5-phospho-alpha-D-ribose 1-diphosphate + anthranilate. Its pathway is amino-acid biosynthesis; L-tryptophan biosynthesis; L-tryptophan from chorismate: step 2/5. In terms of biological role, catalyzes the transfer of the phosphoribosyl group of 5-phosphorylribose-1-pyrophosphate (PRPP) to anthranilate to yield N-(5'-phosphoribosyl)-anthranilate (PRA). This Bacteroides fragilis (strain ATCC 25285 / DSM 2151 / CCUG 4856 / JCM 11019 / LMG 10263 / NCTC 9343 / Onslow / VPI 2553 / EN-2) protein is Anthranilate phosphoribosyltransferase.